The chain runs to 243 residues: uncharacterized protein (243 aa).

Positions 1–19 (MDELALSFSLTCLLPENRA) are cleaved as a signal peptide. Residue asparagine 136 is glycosylated (N-linked (GlcNAc...) asparagine).

Its subcellular location is the secreted. This is an uncharacterized protein from Homo sapiens (Human).